The chain runs to 367 residues: NADH-ubiquinone oxidoreductase chain 1 (367 aa).

Transmembrane regions (helical) follow at residues 5–25 (IIISLIEVVLVLVPALLGIAY), 43–63 (PNFVGYYGLLQAFADALKLLL), 74–94 (IILFFLGPVITLIFSLLGYAV), 108–128 (LGIYYILAVSSLATYGILLAG), 152–172 (LVLSSAILLVIMLTGSLNLSV), 179–199 (AIWNIFPLLPVFIIFFIGSVA), 225–245 (AVVFVFFFLAEYGSIVLMCIL), 265–285 (FFYSILFNIGFIDLNFFNIFY), 301–321 (LIYGLTIGLKSSILIFLFIWV), and 336–356 (FCWTVLLPLLFALIVLLPCIL).

Belongs to the complex I subunit 1 family.

Its subcellular location is the mitochondrion inner membrane. It catalyses the reaction a ubiquinone + NADH + 5 H(+)(in) = a ubiquinol + NAD(+) + 4 H(+)(out). In terms of biological role, core subunit of the mitochondrial membrane respiratory chain NADH dehydrogenase (Complex I) that is believed to belong to the minimal assembly required for catalysis. Complex I functions in the transfer of electrons from NADH to the respiratory chain. The immediate electron acceptor for the enzyme is believed to be ubiquinone. In Podospora anserina (strain S / ATCC MYA-4624 / DSM 980 / FGSC 10383) (Pleurage anserina), this protein is NADH-ubiquinone oxidoreductase chain 1 (ND1).